The sequence spans 434 residues: Glutamate-1-semialdehyde 2,1-aminomutase (434 aa).

Lys-267 bears the N6-(pyridoxal phosphate)lysine mark.

The protein belongs to the class-III pyridoxal-phosphate-dependent aminotransferase family. HemL subfamily. Homodimer. The cofactor is pyridoxal 5'-phosphate.

It is found in the cytoplasm. The catalysed reaction is (S)-4-amino-5-oxopentanoate = 5-aminolevulinate. It functions in the pathway porphyrin-containing compound metabolism; protoporphyrin-IX biosynthesis; 5-aminolevulinate from L-glutamyl-tRNA(Glu): step 2/2. It participates in porphyrin-containing compound metabolism; chlorophyll biosynthesis. This is Glutamate-1-semialdehyde 2,1-aminomutase from Roseiflexus castenholzii (strain DSM 13941 / HLO8).